The following is an 882-amino-acid chain: Protein PML (882 aa).

Positions 1–48 (MEPAPARSPRPQQDPARPQEPTMPPPETPSEGRQPSPSPSPTERAPAS) are disordered. Ser-8 is subject to Phosphoserine; by HIPK2. A phosphoserine; by HIPK2 and MAPK1 mark is found at Ser-36 and Ser-38. Position 48 is a phosphoserine (Ser-48). Zn(2+)-binding residues include Cys-57 and Cys-60. The segment at 57–92 (CQQCQAEAKCPKLLPCLHTLCSGCLEASGMQCPICQ) adopts an RING-type zinc-finger fold. A Glycyl lysine isopeptide (Lys-Gly) (interchain with G-Cter in SUMO1); alternate cross-link involves residue Lys-65. Lys-65 participates in a covalent cross-link: Glycyl lysine isopeptide (Lys-Gly) (interchain with G-Cter in SUMO2); alternate. Positions 72, 74, 77, 80, 88, and 91 each coordinate Zn(2+). Position 117 is a phosphoserine; by CHEK2 (Ser-117). A B box-type 1; atypical zinc finger spans residues 124–166 (DAQAVCTRCKESADFWCFECEQLLCAKCFEAHQWFLKHEARPL). The Zn(2+) site is built by Cys-129, Cys-132, Cys-151, and His-155. Lys-160 is covalently cross-linked (Glycyl lysine isopeptide (Lys-Gly) (interchain with G-Cter in SUMO1); alternate). Lys-160 is covalently cross-linked (Glycyl lysine isopeptide (Lys-Gly) (interchain with G-Cter in SUMO2); alternate). Lys-160 is covalently cross-linked (Glycyl lysine isopeptide (Lys-Gly) (interchain with G-Cter in SUMO1P1/SUMO5); alternate). The B box-type 2 zinc-finger motif lies at 183–236 (KTNNIFCSNPNHRTPTLTSIYCRGCSKPLCCSCALLDSSHSELKCDISAEIQQR). Residues Cys-189, His-194, Cys-215, and His-222 each coordinate Zn(2+). A coiled-coil region spans residues 228-253 (DISAEIQQRQEELDAMTQALQEQDSA). Lys-380 is covalently cross-linked (Glycyl lysine isopeptide (Lys-Gly) (interchain with G-Cter in SUMO2); alternate). Lys-380 participates in a covalent cross-link: Glycyl lysine isopeptide (Lys-Gly) (interchain with G-Cter in /SUMO5); alternate. Lys-380 participates in a covalent cross-link: Glycyl lysine isopeptide (Lys-Gly) (interchain with G-Cter in ubiquitin); alternate. Lys-394 is covalently cross-linked (Glycyl lysine isopeptide (Lys-Gly) (interchain with G-Cter in SUMO2)). Lys-400 is covalently cross-linked (Glycyl lysine isopeptide (Lys-Gly) (interchain with G-Cter in SUMO1P1/SUMO5); alternate). Glycyl lysine isopeptide (Lys-Gly) (interchain with G-Cter in ubiquitin); alternate cross-links involve residues Lys-400 and Lys-401. Residue Lys-401 forms a Glycyl lysine isopeptide (Lys-Gly) (interchain with G-Cter in SUMO2); alternate linkage. Residue Ser-403 is modified to Phosphoserine; by MAPK1 and MAPK7. An interaction with PER2 region spans residues 448 to 555 (GAHPVPVYAF…ASGAGEAEER (108 aa)). Residue Lys-460 forms a Glycyl lysine isopeptide (Lys-Gly) (interchain with G-Cter in SUMO2) linkage. The segment at 467 to 589 (DVSNTTTAQK…SESSDLQLEG (123 aa)) is disordered. Residues 468-484 (VSNTTTAQKRKCSQTQC) show a composition bias toward polar residues. Lys-476 is covalently cross-linked (Glycyl lysine isopeptide (Lys-Gly) (interchain with G-Cter in SUMO2); alternate). Lys-476 is covalently cross-linked (Glycyl lysine isopeptide (Lys-Gly) (interchain with G-Cter in ubiquitin); alternate). The short motif at 476–490 (KRKCSQTQCPRKVIK) is the Nuclear localization signal element. Residue Lys-478 forms a Glycyl lysine isopeptide (Lys-Gly) (interchain with G-Cter in SUMO2) linkage. Residues Lys-487 and Lys-490 each participate in a glycyl lysine isopeptide (Lys-Gly) (interchain with G-Cter in SUMO2); alternate cross-link. Lys-487 carries the N6-acetyllysine; alternate modification. Residues 489 to 501 (IKMESEEGKEARL) show a composition bias toward basic and acidic residues. Residue Lys-490 forms a Glycyl lysine isopeptide (Lys-Gly) (interchain with G-Cter in SUMO1); alternate linkage. Residue Lys-490 forms a Glycyl lysine isopeptide (Lys-Gly) (interchain with G-Cter in SUMO1P1/SUMO5); alternate linkage. Residue Ser-493 is modified to Phosphoserine. Lys-497 is covalently cross-linked (Glycyl lysine isopeptide (Lys-Gly) (interchain with G-Cter in SUMO1); alternate). Lys-497 participates in a covalent cross-link: Glycyl lysine isopeptide (Lys-Gly) (interchain with G-Cter in SUMO2); alternate. Lys-497 is covalently cross-linked (Glycyl lysine isopeptide (Lys-Gly) (interchain with G-Cter in SUMO1P1/SUMO5); alternate). A Phosphoserine modification is found at Ser-504. At Ser-505 the chain carries Phosphoserine; by MAPK1. The segment covering 505-516 (SPEQPRPSTSKA) has biased composition (polar residues). A Phosphoserine modification is found at Ser-512. At Lys-515 the chain carries N6-acetyllysine. Residues Ser-518, Ser-527, and Ser-530 each carry the phosphoserine modification. Ser-518 carries the phosphoserine; by CDK1 and CDK2 modification. Phosphoserine; by MAPK1 occurs at positions 527 and 530. The interval 556-562 (VVVISSS) is sumo interaction motif (SIM). Ser-565 bears the Phosphoserine mark. Residue Ser-565 is modified to Phosphoserine; by CK2. A Phosphothreonine modification is found at Thr-867.

In terms of assembly, key component of PML bodies. PML bodies are formed by the interaction of PML homodimers (via SUMO-binding motif) with sumoylated PML, leading to the assembly of higher oligomers. Several types of PML bodies have been observed. PML bodies can form hollow spheres that can sequester target proteins inside. Interacts (via SUMO-binding motif) with sumoylated proteins. Interacts (via C-terminus) with p53/TP53. Recruits p53/TP53 and CHEK2 into PML bodies, which promotes p53/TP53 phosphorylation at 'Ser-20' and prevents its proteasomal degradation. Interacts with MDM2, and sequesters MDM2 in the nucleolus, thereby preventing ubiquitination of p53/TP53. Interaction with PML-RARA oncoprotein and certain viral proteins causes disassembly of PML bodies and abolishes the normal PML function. Interacts with HIPK2, TERT, SIRT1, TOPBP1, TRIM27 and TRIM69. Interacts with ELF4 (via C-terminus). Interacts with ITPR3. Interacts (in the cytoplasm) with TGFBR1, TGFBR2 and PKM. Interacts (via the coiled-coil domain and when sumoylated) with SATB1. Interacts with UBE2I; the interaction is enhanced by arsenic binding. Interacts (PML-RARA oncoprotein, via the coiled-coil domain) with UBE2I; the interaction is enhanced by arsenic binding and is required for PML-RARA oncoprotein sumoylation and inhibition of RARA transactivational activity. Interacts with RB1, PPP1A, SMAD2, SMAD3, DAXX, RPL11 and MTOR. Interacts with PPARGC1A and KAT2A. Interacts with CSNK2A1 and CSNK2A3. Interacts with ANKRD2; the interaction is direct. Interacts (via SUMO-interacting motif) with sumoylated MORC3. Isoform PML-1, isoform PML-2, isoform PML-3, isoform PML-4, isoform PML-5 and isoform PML-6 interact with RNF4. Isoform PML-1 interacts with NLRP3. Isoform PML-1, isoform PML-2, isoform PML-3, isoform PML-4 and isoform PML-5 interact with MAGEA2, RBL2, PER2 and E2F4. Isoform PML-2 interacts with CIITA. Isoform PML-2, isoform PML-3 and isoform PML-4 interact with TBX2. Isoform PML-4 interacts with RANBP2, HDAC7, KAT6A, WRN, PIN1, TBX3 and phosphorylated MAPK1/ERK2. Isoform PML-4 interacts with the CTNNB1 and TCF7L2/TCF4 complex. Isoform PML-4 preferentially interacts with MAPK7/BMK1 although other isoforms (isoform PML-1, isoform PML-2, isoform PML-3 and isoform PML-6) also interact with it. Isoform PML-12 interacts with PIAS1, PIAS2 (isoform PIAS2-alpha) and CSNK2A1/CK2. Interacts with TRIM16. Interacts with PRDM1/Blimp-1. Interacts (via RING-type zinc finger) with EIF4E; the interaction results in conformational changes of both interacting proteins and reduces EIF4E affinity for the 5' m7G cap of mRNA, thus reducing EIF4E-mediated mRNA nuclear export. (Microbial infection) Interacts with Lassa virus Z protein and rabies virus phosphoprotein. As to quaternary structure, (Microbial infection) Isoform PML-1 interacts with herpes simplex virus-1/HHV-1 ICP0. In terms of assembly, (Microbial infection) Isoform PML-2 interacts with human adenovirus 2 E1A and this interaction stimulates E1A-dependent transcriptional activation. (Microbial infection) Isoform PML-4 interacts with VZV capsid protein VP26/ORF23 capsid protein. As to quaternary structure, (Microbial infection) The sumoylated isoform PML-4 interacts with encephalomyocarditis virus (EMCV) RNA-directed RNA polymerase 3D-POL (P3D-POL). In terms of assembly, (Microbial infection) Isoform PML-6 interacts with moloney murine leukemia virus (MoMLV) integrase (IN) and reverse transcriptase (RT). (Microbial infection) Isoform PML-4 and isoform PML-5 interact with human adenovirus 5 E1B-55K protein; these interactions promote efficient subnuclear targeting of E1B-55K to PML nuclear bodies. As to quaternary structure, (Microbial infection) Isoform PML-3 interacts (via RING-type zinc finger) with human foamy virus bel1/tas and bet. In terms of assembly, (Microbial infection) Interacts with human cytomegalovirus (HHV-5) immediate early protein IE1; this interaction mediates PML desumoylation and PML-mediated sumoylation of IE1. Ubiquitinated; mediated by RNF4, RNF111, UHRF1, UBE3A/E6AP, BCR(KLHL20) E3 ubiquitin ligase complex E3 ligase complex, SIAH1 or SIAH2 and leading to subsequent proteasomal degradation. Ubiquitination by BCR(KLHL20) E3 ubiquitin ligase complex E3 ligase complex requires CDK1/2-mediated phosphorylation at Ser-518 which in turn is recognized by prolyl-isopeptidase PIN1 and PIN1-catalyzed isomerization further potentiates PML interaction with KLHL20. 'Lys-6'-, 'Lys-11'-, 'Lys-48'- and 'Lys-63'-linked polyubiquitination by RNF4 is polysumoylation-dependent. Ubiquitination by RNF111 is polysumoylation-dependent. In terms of processing, sumoylation regulates PML's: stability in response to extracellular or intracellular stimuli, transcription directly and indirectly, through sequestration of or dissociation of the transcription factors from PML-NBs, ability to regulate apoptosis and its anti-viral activities. It is also essential for: maintaining proper PML nuclear bodies (PML-NBs) structure and normal function, recruitment of components of PML-NBs, the turnover and retention of PML in PML-NBs and the integrity of PML-NBs. Undergoes 'Lys-11'-linked sumoylation. Sumoylation on all three sites (Lys-65, Lys-160 and Lys-490) is required for nuclear body formation. Sumoylation on Lys-160 is a prerequisite for sumoylation on Lys-65. Lys-65 and Lys-160 are sumoylated by PISA1 and PIAS2. PIAS1-mediated sumoylation of PML promotes its interaction with CSNK2A1/CK2 and phosphorylation at Ser-565 which in turn triggers its ubiquitin-mediated degradation. PIAS1-mediated sumoylation of PML-RARA promotes its ubiquitin-mediated degradation. The PML-RARA fusion protein requires the coiled-coil domain for sumoylation. Sumoylation at Lys-490 by RANBP2 is essential for the proper assembly of PML-NBs. SUMO1P1/SUMO5 conjugated PML at Lys-160, Lys-380, Lys-400, Lys-490 and Lys-497, but Lys-380, Lys-400 and Lys-497 are not key acceptor lysines. SUMO1P1/SUMO5 forms polymeric chain on Lys-160 of PML by successive conjugation at 'Lys-18'; facilitating recruitment of PML-NB components, which enlarges PML. SUMO1P1/SUMO5 conjugation of PML increases SUMO2/3 conjugation, which leads to the recruitment of RNF4 and ubiquitin-dependent disintegration of PML-NBs. SUMO1P1/SUMO5 monoconjugated Lys-490. DNA damage triggers its sumoylation while some but not all viral infections can abolish sumoylation. Desumoylated by SENP1, SENP2, SENP3, SENP5 and SENP6. Arsenic induces PML and PML-RARA polysumoylation and their subsequent RNF4-dependent ubiquitination and proteasomal degradation, and is used as treatment in acute promyelocytic leukemia (APL). The nuclear isoforms (isoform PML-1, isoform PML-2, isoform PML-3, isoform PML-4, isoform PML-5 and isoform PML-6) show an increased sumoylation in response to arsenic trioxide. The cytoplasmic isoform PML-7 is not sumoylated. Post-translationally, phosphorylation is a major regulatory mechanism that controls PML protein abundance and the number and size of PML nuclear bodies (PML-NBs). Phosphorylated in response to DNA damage, probably by ATR. HIPK2-mediated phosphorylation at Ser-8, Ser-36 and Ser-38 leads to increased accumulation of PML protein and its sumoylation and is required for the maximal pro-apoptotic activity of PML after DNA damage. CHEK2-mediated phosphorylation at Ser-117 is important for PML-mediated apoptosis following DNA damage. MAPK1-mediated phosphorylations at Ser-403, Ser-505, Ser-527 and Ser-530 and CDK1/2-mediated phosphorylation at Ser-518 promote PIN1-dependent PML degradation. CK2-mediated phosphorylation at Ser-565 primes PML ubiquitination via an unidentified ubiquitin ligase. (Microbial infection) Upon infection with Epstein-Barr virus, phosphorylated by CK2. Viral EBNA1 increases the association of CK2 with PML proteins, which increases PML phosphorylation by CK2, triggering the USP7-dependent polyubiquitylation and degradation of PML. In terms of processing, acetylation at Lys-487 is essential for its nuclear localization. Deacetylated at Lys-487 by SIRT1 and this deacetylation promotes PML control of PER2 nuclear localization. Post-translationally, (Microbial infection) Immediate early protein IE1 of human cytomegalovirus (HHV-5) interferes with the sumoylation of PML. Immediate early protein IE1 inhibits PML de novo sumoylation. (Microbial infection) Cleaved at two different sites by enterovirus 71 protease 3C, leading to impaired PML-Nuclear bodies formation.

The protein resides in the nucleus. It localises to the nucleoplasm. Its subcellular location is the cytoplasm. It is found in the PML body. The protein localises to the nucleolus. The protein resides in the endoplasmic reticulum membrane. It localises to the early endosome membrane. Its pathway is protein modification; protein sumoylation. Its function is as follows. Functions via its association with PML-nuclear bodies (PML-NBs) in a wide range of important cellular processes, including tumor suppression, transcriptional regulation, apoptosis, senescence, DNA damage response, and viral defense mechanisms. Acts as the scaffold of PML-NBs allowing other proteins to shuttle in and out, a process which is regulated by SUMO-mediated modifications and interactions. Inhibits EIF4E-mediated mRNA nuclear export by reducing EIF4E affinity for the 5' 7-methylguanosine (m7G) cap of target mRNAs. Isoform PML-4 has a multifaceted role in the regulation of apoptosis and growth suppression: activates RB1 and inhibits AKT1 via interactions with PP1 and PP2A phosphatases respectively, negatively affects the PI3K pathway by inhibiting MTOR and activating PTEN, and positively regulates p53/TP53 by acting at different levels (by promoting its acetylation and phosphorylation and by inhibiting its MDM2-dependent degradation). Isoform PML-4 also: acts as a transcriptional repressor of TBX2 during cellular senescence and the repression is dependent on a functional RBL2/E2F4 repressor complex, regulates double-strand break repair in gamma-irradiation-induced DNA damage responses via its interaction with WRN, acts as a negative regulator of telomerase by interacting with TERT, and regulates PER2 nuclear localization and circadian function. Isoform PML-6 inhibits specifically the activity of the tetrameric form of PKM. The nuclear isoforms (isoform PML-1, isoform PML-2, isoform PML-3, isoform PML-4 and isoform PML-5) in concert with SATB1 are involved in local chromatin-loop remodeling and gene expression regulation at the MHC-I locus. Isoform PML-2 is required for efficient IFN-gamma induced MHC II gene transcription via regulation of CIITA. Cytoplasmic PML is involved in the regulation of the TGF-beta signaling pathway. PML also regulates transcription activity of ELF4 and can act as an important mediator for TNF-alpha- and IFN-alpha-mediated inhibition of endothelial cell network formation and migration. Exhibits antiviral activity against both DNA and RNA viruses. The antiviral activity can involve one or several isoform(s) and can be enhanced by the permanent PML-NB-associated protein DAXX or by the recruitment of p53/TP53 within these structures. Isoform PML-4 restricts varicella zoster virus (VZV) via sequestration of virion capsids in PML-NBs thereby preventing their nuclear egress and inhibiting formation of infectious virus particles. The sumoylated isoform PML-4 restricts rabies virus by inhibiting viral mRNA and protein synthesis. The cytoplasmic isoform PML-14 can restrict herpes simplex virus-1 (HHV-1) replication by sequestering the viral E3 ubiquitin-protein ligase ICP0 in the cytoplasm. Isoform PML-6 shows restriction activity towards human cytomegalovirus (HHV-5) and influenza A virus strains PR8(H1N1) and ST364(H3N2). Sumoylated isoform PML-4 and isoform PML-12 show antiviral activity against encephalomyocarditis virus (EMCV) by promoting nuclear sequestration of viral polymerase (P3D-POL) within PML NBs. Isoform PML-3 exhibits antiviral activity against poliovirus by inducing apoptosis in infected cells through the recruitment and the activation of p53/TP53 in the PML-NBs. Isoform PML-3 represses human foamy virus (HFV) transcription by complexing the HFV transactivator, bel1/tas, preventing its binding to viral DNA. PML may positively regulate infectious hepatitis C viral (HCV) production and isoform PML-2 may enhance adenovirus transcription. Functions as an E3 SUMO-protein ligase that sumoylates (HHV-5) immediate early protein IE1, thereby participating in the antiviral response. Isoforms PML-3 and PML-6 display the highest levels of sumoylation activity. The protein is Protein PML (PML) of Homo sapiens (Human).